The following is a 457-amino-acid chain: tRNA modification GTPase MnmE (457 aa).

The (6S)-5-formyl-5,6,7,8-tetrahydrofolate site is built by R25, E87, and R126. The 155-residue stretch at 223 to 377 (GISTAIIGRP…IEERINQLFF (155 aa)) folds into the TrmE-type G domain. Residue N233 coordinates K(+). Residues 233-238 (NVGKSS), 252-258 (TDIEGTT), and 277-280 (DTAG) contribute to the GTP site. S237 contacts Mg(2+). T252, I254, and T257 together coordinate K(+). Position 258 (T258) interacts with Mg(2+). K457 is a (6S)-5-formyl-5,6,7,8-tetrahydrofolate binding site.

The protein belongs to the TRAFAC class TrmE-Era-EngA-EngB-Septin-like GTPase superfamily. TrmE GTPase family. In terms of assembly, homodimer. Heterotetramer of two MnmE and two MnmG subunits. It depends on K(+) as a cofactor.

The protein localises to the cytoplasm. In terms of biological role, exhibits a very high intrinsic GTPase hydrolysis rate. Involved in the addition of a carboxymethylaminomethyl (cmnm) group at the wobble position (U34) of certain tRNAs, forming tRNA-cmnm(5)s(2)U34. The polypeptide is tRNA modification GTPase MnmE (Streptococcus sanguinis (strain SK36)).